A 414-amino-acid chain; its full sequence is Tyrosine--tRNA ligase (414 aa).

L-tyrosine is bound at residue tyrosine 35. The 'HIGH' region signature appears at 40-49; sequence PTADSLHVGH. The L-tyrosine site is built by tyrosine 164 and glutamine 168. Positions 226 to 230 match the 'KMSKS' region motif; that stretch reads KFGKT. ATP is bound at residue lysine 229. The 68-residue stretch at 347 to 414 folds into the S4 RNA-binding domain; that stretch reads TKVIDALIEV…KKKYFVILIK (68 aa).

The protein belongs to the class-I aminoacyl-tRNA synthetase family. TyrS type 1 subfamily. Homodimer.

The protein localises to the cytoplasm. The catalysed reaction is tRNA(Tyr) + L-tyrosine + ATP = L-tyrosyl-tRNA(Tyr) + AMP + diphosphate + H(+). In terms of biological role, catalyzes the attachment of tyrosine to tRNA(Tyr) in a two-step reaction: tyrosine is first activated by ATP to form Tyr-AMP and then transferred to the acceptor end of tRNA(Tyr). This is Tyrosine--tRNA ligase from Mycoplasma mycoides subsp. mycoides SC (strain CCUG 32753 / NCTC 10114 / PG1).